Reading from the N-terminus, the 96-residue chain is Large ribosomal subunit protein bL27 (96 aa).

The propeptide occupies 1–9 (MLNMNLQLL).

The protein belongs to the bacterial ribosomal protein bL27 family. Post-translationally, the N-terminus is cleaved by ribosomal processing cysteine protease Prp.

This Clostridioides difficile (strain 630) (Peptoclostridium difficile) protein is Large ribosomal subunit protein bL27.